A 153-amino-acid polypeptide reads, in one-letter code: Ribonuclease H (153 aa).

One can recognise an RNase H type-1 domain in the interval 7–148; sequence PADLVEMWTD…ADMLANQGVA (142 aa). Positions 16, 54, 76, and 140 each coordinate Mg(2+).

It belongs to the RNase H family. Monomer. Mg(2+) serves as cofactor.

The protein resides in the cytoplasm. It catalyses the reaction Endonucleolytic cleavage to 5'-phosphomonoester.. In terms of biological role, endonuclease that specifically degrades the RNA of RNA-DNA hybrids. In Bordetella avium (strain 197N), this protein is Ribonuclease H.